The following is a 645-amino-acid chain: Zinc finger and SCAN domain-containing protein 2 (645 aa).

Disordered stretches follow at residues 1 to 25, 37 to 75, and 193 to 230; these read MMAA…EEDR, DDSW…GPQG, and EMPE…HGEV. The region spanning 59–132 is the SCAN box domain; it reads SAGKGSPQEE…ALVEDLTQTL (74 aa). Residues 199–214 show a composition bias toward basic and acidic residues; sequence SAQHSDGESDFERDAG. C2H2-type zinc fingers lie at residues 253-275, 281-303, 309-331, 337-359, 365-387, 393-415, 421-443, 449-471, 477-499, 505-527, 533-555, 561-583, 589-611, and 617-639; these read YECP…ERTH, YKCD…QTTH, YKCR…QRIH, FQCA…QRTH, YSCP…QGIH, YECK…QRIH, YKCT…RRTH, YQCS…RRTH, YKCG…QGMH, YECL…QRIH, YKCS…QQTH, YKCL…QRAH, YRCP…QRIH, and YKCP…QRTH.

Belongs to the krueppel C2H2-type zinc-finger protein family.

The protein localises to the nucleus. Its function is as follows. May be involved in transcriptional regulation during the post-meiotic stages of spermatogenesis. This is Zinc finger and SCAN domain-containing protein 2 (ZSCAN2) from Pongo abelii (Sumatran orangutan).